An 89-amino-acid polypeptide reads, in one-letter code: Small ribosomal subunit protein uS15 (89 aa).

Over residues 1-21 (MSIAAERKAEVIKTNARKDGD) the composition is skewed to basic and acidic residues. The interval 1 to 24 (MSIAAERKAEVIKTNARKDGDTGS) is disordered.

It belongs to the universal ribosomal protein uS15 family. As to quaternary structure, part of the 30S ribosomal subunit. Forms a bridge to the 50S subunit in the 70S ribosome, contacting the 23S rRNA.

Its function is as follows. One of the primary rRNA binding proteins, it binds directly to 16S rRNA where it helps nucleate assembly of the platform of the 30S subunit by binding and bridging several RNA helices of the 16S rRNA. Functionally, forms an intersubunit bridge (bridge B4) with the 23S rRNA of the 50S subunit in the ribosome. The chain is Small ribosomal subunit protein uS15 from Rhodopseudomonas palustris (strain BisA53).